A 381-amino-acid chain; its full sequence is Pentatricopeptide repeat-containing protein 2, mitochondrial (381 aa).

The PPR repeat unit spans residues 157–191 (DTTSFNITIDMLFNKQLYESGLEVVGEMKKQGVSL).

The protein belongs to the PTCD2 family.

It localises to the mitochondrion. In terms of biological role, involved in mitochondrial RNA maturation and mitochondrial respiratory chain function. The sequence is that of Pentatricopeptide repeat-containing protein 2, mitochondrial (ptcd2) from Danio rerio (Zebrafish).